The sequence spans 398 residues: L-methionine gamma-lyase (398 aa).

Residues 59–61 (YSR) and 89–90 (GM) contribute to the pyridoxal 5'-phosphate site. A substrate-binding site is contributed by Y114. Residue 208 to 210 (SAT) participates in pyridoxal 5'-phosphate binding. K211 carries the post-translational modification N6-(pyridoxal phosphate)lysine. R375 contacts substrate.

It belongs to the trans-sulfuration enzymes family. L-methionine gamma-lyase subfamily. In terms of assembly, homotetramer; dimer of active dimers. Requires pyridoxal 5'-phosphate as cofactor.

It catalyses the reaction L-methionine + H2O = methanethiol + 2-oxobutanoate + NH4(+). The catalysed reaction is L-homocysteine + H2O = 2-oxobutanoate + hydrogen sulfide + NH4(+) + H(+). Irreversibly inactivated by DL-propargylglycine. Functionally, catalyzes the alpha,gamma-elimination of L-methionine to produce methanethiol, 2-oxobutanoate and ammonia. Is involved in L-methionine catabolism. In fact, shows a multicatalytic function since it also catalyzes gamma-replacement of L-methionine with thiol compounds, alpha,gamma-elimination and gamma-replacement reactions of L-homocysteine and its S-substituted derivatives, O-substituted-L-homoserines and DL-selenomethionine, and, to a lesser extent, alpha,beta-elimination and beta-replacement reactions of L-cysteine, S-methyl-L-cysteine, and O-acetyl-L-serine. Also catalyzes deamination and gamma-addition reactions of L-vinylglycine. Thus, the enzyme is able to cleave C-S, C-Se, and C-O bonds of sulfur, selenium, and oxygen amino acids, respectively. The protein is L-methionine gamma-lyase of Pseudomonas putida (Arthrobacter siderocapsulatus).